Here is a 281-residue protein sequence, read N- to C-terminus: Acetyl-coenzyme A carboxylase carboxyl transferase subunit beta 2 (281 aa).

The CoA carboxyltransferase N-terminal domain occupies 26–281 (LLTRCPVCHE…TITQGGHQDV (256 aa)). C30, C33, C48, and C51 together coordinate Zn(2+). The segment at 30–51 (CPVCHEDCYTQDLGEFKVCPHC) adopts a C4-type zinc-finger fold.

This sequence belongs to the AccD/PCCB family. Acetyl-CoA carboxylase is a heterohexamer composed of biotin carboxyl carrier protein (AccB), biotin carboxylase (AccC) and two subunits each of ACCase subunit alpha (AccA) and ACCase subunit beta (AccD). Requires Zn(2+) as cofactor.

Its subcellular location is the cytoplasm. The enzyme catalyses N(6)-carboxybiotinyl-L-lysyl-[protein] + acetyl-CoA = N(6)-biotinyl-L-lysyl-[protein] + malonyl-CoA. It participates in lipid metabolism; malonyl-CoA biosynthesis; malonyl-CoA from acetyl-CoA: step 1/1. Its function is as follows. Component of the acetyl coenzyme A carboxylase (ACC) complex. Biotin carboxylase (BC) catalyzes the carboxylation of biotin on its carrier protein (BCCP) and then the CO(2) group is transferred by the transcarboxylase to acetyl-CoA to form malonyl-CoA. The protein is Acetyl-coenzyme A carboxylase carboxyl transferase subunit beta 2 of Lactiplantibacillus plantarum (strain JDM1) (Lactobacillus plantarum).